The chain runs to 737 residues: NAD-dependent protein deacetylase sirtuin-1 (737 aa).

Residues 1–28 (MADEVALALQAAGSPSAAAAMEAASQPA) are compositionally biased toward low complexity. 2 disordered regions span residues 1 to 56 (MADE…AVAP) and 75 to 125 (EAAG…EAAA). Ala2 carries the N-acetylalanine modification. Residues 2 to 131 (ADEVALALQA…EAAAAAAAAA (130 aa)) form an interaction with CLOCK region. Residues 2–268 (ADEVALALQA…SCGIPDFRSR (267 aa)) form an interaction with H1-4 region. A phosphoserine mark is found at Ser14 and Ser25. A Nuclear localization signal motif is present at residues 32 to 39 (LRKRPRRD). Ser46 bears the Phosphoserine; by MAPK8 mark. Composition is skewed to low complexity over residues 46 to 56 (SPGEPSAAVAP) and 75 to 94 (EAAG…AVAG). A compositionally biased stretch (acidic residues) spans 111 to 123 (DFDDDEGEEEDEA). An interaction with CCAR2 region spans residues 135 to 533 (RDNLLLTDGL…LHISEDSSSP (399 aa)). The Nuclear export signal signature appears at 138-145 (LLLTDGLL). Ser151, Ser154, Ser164, and Ser165 each carry phosphoserine. The disordered stretch occupies residues 152-171 (CESDDDDRTSHASSSDWTPR). The short motif at 223–230 (PPKRKKRK) is the Nuclear localization signal element. One can recognise a Deacetylase sirtuin-type domain in the interval 228-488 (KRKDINTIED…NELCHRLGGE (261 aa)). An N6-acetyllysine modification is found at Lys230. The tract at residues 248–251 (IIVL) is required for interaction with the sumoylated form of CCAR2. Residues 253 to 272 (GAGV…DGIY) and 337 to 340 (QNID) contribute to the NAD(+) site. The Proton acceptor role is filled by His355. Residues Cys363 and Cys366 each coordinate Zn(2+). Lys369 carries the N6-acetyllysine modification. Cys387 and Cys390 together coordinate Zn(2+). An S-nitrosocysteine mark is found at Cys387 and Cys390. Lys422 carries the post-translational modification N6-acetyllysine. The Nuclear export signal signature appears at 425–431 (VDLLIVI). NAD(+) is bound by residues 432-434 (GSS), 457-459 (NRE), and Cys474. At Lys505 the chain carries N6-acetyllysine. The interval 514–539 (VHLSELPPTPLHISEDSSSPERTVPQ) is disordered. A Phosphothreonine; by DYRK1A, DYRK3 and MAPK8 modification is found at Thr522. Ser527 is modified (phosphoserine). The segment covering 529-539 (DSSSPERTVPQ) has biased composition (polar residues). Residue Thr536 is modified to Phosphothreonine. The residue at position 600 (Lys600) is an N6-acetyllysine. Ser649 and Ser651 each carry phosphoserine; by CaMK2. Residues 653–713 (DDVLSSSSCG…GSGFGADGGD (61 aa)) are disordered. The segment covering 656-676 (LSSSSCGSNSDSGTCQSPSLE) has biased composition (low complexity). Positions 677-697 (EPLEDESEIEEFYNGLEDDTE) are enriched in acidic residues. Residue Ser737 is modified to Phosphoserine.

Belongs to the sirtuin family. Class I subfamily. As to quaternary structure, interacts with XBP1 isoform 2. Found in a complex with PCAF and MYOD1 Component of the eNoSC complex, composed of SIRT1, SUV39H1 and RRP8. Interacts with HES1, HEY2 and PML. Interacts with RPS19BP1/AROS. Interacts with CCAR2 (via N-terminus); the interaction disrupts the interaction between SIRT1 and p53/TP53. Interacts with SETD7; the interaction induces the dissociation of SIRT1 from p53/TP53 and increases p53/TP53 activity. Interacts with MYCN, NR1I2, CREBZF, TSC2, TLE1, FOS, JUN, NR0B2, PPARG, NCOR, IRS1, IRS2 and NMNAT1. Interacts with HNF1A; the interaction occurs under nutrient restriction. Interacts with SUZ12; the interaction mediates the association with the PRC4 histone methylation complex which is specific as an association with PCR2 and PCR3 complex variants is not found. Interacts with FOXO1; the interaction deacetylates FOXO1, enhances its DNA-binding ability and increases its transcriptional activity. Interacts with BCL6; leads to a epigenetic repression of specific target genes. Interacts with CLOCK, BMAL1 and PER2. Interacts with PPARA; the interaction seems to be modulated by NAD(+) levels. Interacts with NR1H3 and this interaction is inhibited in the presence of CCAR2. Interacts with CHEK2 and p53/TP53. Exhibits a preferential interaction with sumoylated CCAR2 over its unmodified form. Interacts with PACS2. Interacts with SIRT7. Interacts with PUS7. Interacts with TULP3. Interacts with MORN3; the interaction enhances the ubiquitination of p53/TP53. The cofactor is Zn(2+). Methylated on multiple lysine residues; methylation is enhanced after DNA damage and is dispensable for deacetylase activity toward p53/TP53. In terms of processing, phosphorylated. Phosphorylated by STK4/MST1, resulting in inhibition of SIRT1-mediated p53/TP53 deacetylation. Phosphorylation by MAPK8/JNK1 at Ser-46 and Thr-522 leads to increased nuclear localization and enzymatic activity. Phosphorylation at Thr-522 by DYRK1A and DYRK3 activates deacetylase activity and promotes cell survival. Phosphorylation by mammalian target of rapamycin complex 1 (mTORC1) at Ser-46 inhibits deacetylation activity. Phosphorylated by CaMK2, leading to increased p53/TP53 and NF-kappa-B p65/RELA deacetylation activity. Post-translationally, proteolytically cleaved by cathepsin B upon TNF-alpha treatment to yield catalytic inactive but stable SirtT1 75 kDa fragment (75SirT1). S-nitrosylated by GAPDH, leading to inhibit the NAD-dependent protein deacetylase activity. In terms of processing, acetylated at various Lys residues. Deacetylated via an autocatalytic mechanism. Autodeacetylation at Lys-230 promotes its protein deacetylase activity. Post-translationally, ubiquitinated; leading to degradation. Deubiquitinated by USP22; leading to stabilization. Widely expressed. Weakly expressed in liver and skeletal muscle.

It is found in the nucleus. The protein localises to the PML body. The protein resides in the cytoplasm. Its subcellular location is the mitochondrion. The catalysed reaction is N(6)-acetyl-L-lysyl-[protein] + NAD(+) + H2O = 2''-O-acetyl-ADP-D-ribose + nicotinamide + L-lysyl-[protein]. It carries out the reaction N(6)-propanoyl-L-lysyl-[protein] + NAD(+) + H2O = 3''-O-propanoyl-ADP-D-ribose + nicotinamide + L-lysyl-[protein]. The enzyme catalyses N(6)-(2E)-butenoyl-L-lysyl-[protein] + NAD(+) + H2O = 2''-O-(2E)-but-2-enoyl-ADP-D-ribose + nicotinamide + L-lysyl-[protein]. It catalyses the reaction N(6)-[(S)-lactoyl]-L-lysyl-[protein] + NAD(+) + H2O = 2''-O-(S)-lactoyl-ADP-D-ribose + nicotinamide + L-lysyl-[protein]. With respect to regulation, activated by resveratrol (3,5,4'-trihydroxy-trans-stilbene), butein (3,4,2',4'-tetrahydroxychalcone), piceatannol (3,5,3',4'-tetrahydroxy-trans-stilbene), Isoliquiritigenin (4,2',4'-trihydroxychalcone), fisetin (3,7,3',4'-tetrahydroxyflavone) and quercetin (3,5,7,3',4'-pentahydroxyflavone). MAPK8/JNK1 and RPS19BP1/AROS act as positive regulators of deacetylation activity. Inhibited by nicotinamide. Negatively regulated by CCAR2. NAD-dependent protein deacetylase that links transcriptional regulation directly to intracellular energetics and participates in the coordination of several separated cellular functions such as cell cycle, response to DNA damage, metabolism, apoptosis and autophagy. Can modulate chromatin function through deacetylation of histones and can promote alterations in the methylation of histones and DNA, leading to transcriptional repression. Deacetylates a broad range of transcription factors and coregulators, thereby regulating target gene expression positively and negatively. Serves as a sensor of the cytosolic ratio of NAD(+)/NADH which is altered by glucose deprivation and metabolic changes associated with caloric restriction. Is essential in skeletal muscle cell differentiation and in response to low nutrients mediates the inhibitory effect on skeletal myoblast differentiation which also involves 5'-AMP-activated protein kinase (AMPK) and nicotinamide phosphoribosyltransferase (NAMPT). Component of the eNoSC (energy-dependent nucleolar silencing) complex, a complex that mediates silencing of rDNA in response to intracellular energy status and acts by recruiting histone-modifying enzymes. The eNoSC complex is able to sense the energy status of cell: upon glucose starvation, elevation of NAD(+)/NADP(+) ratio activates SIRT1, leading to histone H3 deacetylation followed by dimethylation of H3 at 'Lys-9' (H3K9me2) by SUV39H1 and the formation of silent chromatin in the rDNA locus. Deacetylates 'Lys-266' of SUV39H1, leading to its activation. Inhibits skeletal muscle differentiation by deacetylating PCAF and MYOD1. Deacetylates H2A and 'Lys-26' of H1-4. Deacetylates 'Lys-16' of histone H4 (in vitro). Involved in NR0B2/SHP corepression function through chromatin remodeling: Recruited to LRH1 target gene promoters by NR0B2/SHP thereby stimulating histone H3 and H4 deacetylation leading to transcriptional repression. Proposed to contribute to genomic integrity via positive regulation of telomere length; however, reports on localization to pericentromeric heterochromatin are conflicting. Proposed to play a role in constitutive heterochromatin (CH) formation and/or maintenance through regulation of the available pool of nuclear SUV39H1. Upon oxidative/metabolic stress decreases SUV39H1 degradation by inhibiting SUV39H1 polyubiquitination by MDM2. This increase in SUV39H1 levels enhances SUV39H1 turnover in CH, which in turn seems to accelerate renewal of the heterochromatin which correlates with greater genomic integrity during stress response. Deacetylates 'Lys-382' of p53/TP53 and impairs its ability to induce transcription-dependent proapoptotic program and modulate cell senescence. Deacetylates TAF1B and thereby represses rDNA transcription by the RNA polymerase I. Deacetylates MYC, promotes the association of MYC with MAX and decreases MYC stability leading to compromised transformational capability. Deacetylates FOXO3 in response to oxidative stress thereby increasing its ability to induce cell cycle arrest and resistance to oxidative stress but inhibiting FOXO3-mediated induction of apoptosis transcriptional activity; also leading to FOXO3 ubiquitination and protesomal degradation. Appears to have a similar effect on MLLT7/FOXO4 in regulation of transcriptional activity and apoptosis. Deacetylates DNMT1; thereby impairs DNMT1 methyltransferase-independent transcription repressor activity, modulates DNMT1 cell cycle regulatory function and DNMT1-mediated gene silencing. Deacetylates RELA/NF-kappa-B p65 thereby inhibiting its transactivating potential and augments apoptosis in response to TNF-alpha. Deacetylates HIF1A, KAT5/TIP60, RB1 and HIC1. Deacetylates FOXO1, which increases its DNA binding ability and enhances its transcriptional activity leading to increased gluconeogenesis in liver. Inhibits E2F1 transcriptional activity and apoptotic function, possibly by deacetylation. Involved in HES1- and HEY2-mediated transcriptional repression. In cooperation with MYCN seems to be involved in transcriptional repression of DUSP6/MAPK3 leading to MYCN stabilization by phosphorylation at 'Ser-62'. Deacetylates MEF2D. Required for antagonist-mediated transcription suppression of AR-dependent genes which may be linked to local deacetylation of histone H3. Represses HNF1A-mediated transcription. Required for the repression of ESRRG by CREBZF. Deacetylates NR1H3 and NR1H2 and deacetylation of NR1H3 at 'Lys-434' positively regulates transcription of NR1H3:RXR target genes, promotes NR1H3 proteasomal degradation and results in cholesterol efflux; a promoter clearing mechanism after reach round of transcription is proposed. Involved in lipid metabolism: deacetylates LPIN1, thereby inhibiting diacylglycerol synthesis. Implicated in regulation of adipogenesis and fat mobilization in white adipocytes by repression of PPARG which probably involves association with NCOR1 and SMRT/NCOR2. Deacetylates p300/EP300 and PRMT1. Deacetylates ACSS2 leading to its activation, and HMGCS1 deacetylation. Involved in liver and muscle metabolism. Through deacetylation and activation of PPARGC1A is required to activate fatty acid oxidation in skeletal muscle under low-glucose conditions and is involved in glucose homeostasis. Involved in regulation of PPARA and fatty acid beta-oxidation in liver. Involved in positive regulation of insulin secretion in pancreatic beta cells in response to glucose; the function seems to imply transcriptional repression of UCP2. Proposed to deacetylate IRS2 thereby facilitating its insulin-induced tyrosine phosphorylation. Deacetylates SREBF1 isoform SREBP-1C thereby decreasing its stability and transactivation in lipogenic gene expression. Involved in DNA damage response by repressing genes which are involved in DNA repair, such as XPC and TP73, deacetylating XRCC6/Ku70, and facilitating recruitment of additional factors to sites of damaged DNA, such as SIRT1-deacetylated NBN can recruit ATM to initiate DNA repair and SIRT1-deacetylated XPA interacts with RPA2. Also involved in DNA repair of DNA double-strand breaks by homologous recombination and specifically single-strand annealing independently of XRCC6/Ku70 and NBN. Promotes DNA double-strand breaks by mediating deacetylation of SIRT6. Transcriptional suppression of XPC probably involves an E2F4:RBL2 suppressor complex and protein kinase B (AKT) signaling. Transcriptional suppression of TP73 probably involves E2F4 and PCAF. Deacetylates WRN thereby regulating its helicase and exonuclease activities and regulates WRN nuclear translocation in response to DNA damage. Deacetylates APEX1 at 'Lys-6' and 'Lys-7' and stimulates cellular AP endonuclease activity by promoting the association of APEX1 to XRCC1. Catalyzes deacetylation of ERCC4/XPF, thereby impairing interaction with ERCC1 and nucleotide excision repair (NER). Increases p53/TP53-mediated transcription-independent apoptosis by blocking nuclear translocation of cytoplasmic p53/TP53 and probably redirecting it to mitochondria. Deacetylates XRCC6/Ku70 at 'Lys-537' and 'Lys-540' causing it to sequester BAX away from mitochondria thereby inhibiting stress-induced apoptosis. Is involved in autophagy, presumably by deacetylating ATG5, ATG7 and MAP1LC3B/ATG8. Deacetylates AKT1 which leads to enhanced binding of AKT1 and PDK1 to PIP3 and promotes their activation. Proposed to play role in regulation of STK11/LBK1-dependent AMPK signaling pathways implicated in cellular senescence which seems to involve the regulation of the acetylation status of STK11/LBK1. Can deacetylate STK11/LBK1 and thereby increase its activity, cytoplasmic localization and association with STRAD; however, the relevance of such activity in normal cells is unclear. In endothelial cells is shown to inhibit STK11/LBK1 activity and to promote its degradation. Deacetylates SMAD7 at 'Lys-64' and 'Lys-70' thereby promoting its degradation. Deacetylates CIITA and augments its MHC class II transactivation and contributes to its stability. Deacetylates MECOM/EVI1. Deacetylates PML at 'Lys-487' and this deacetylation promotes PML control of PER2 nuclear localization. During the neurogenic transition, represses selective NOTCH1-target genes through histone deacetylation in a BCL6-dependent manner and leading to neuronal differentiation. Regulates the circadian expression of several core clock genes, including BMAL1, RORC, PER2 and CRY1 and plays a critical role in maintaining a controlled rhythmicity in histone acetylation, thereby contributing to circadian chromatin remodeling. Deacetylates BMAL1 and histones at the circadian gene promoters in order to facilitate repression by inhibitory components of the circadian oscillator. Deacetylates PER2, facilitating its ubiquitination and degradation by the proteasome. Protects cardiomyocytes against palmitate-induced apoptosis. Deacetylates XBP1 isoform 2; deacetylation decreases protein stability of XBP1 isoform 2 and inhibits its transcriptional activity. Deacetylates PCK1 and directs its activity toward phosphoenolpyruvate production promoting gluconeogenesis. Involved in the CCAR2-mediated regulation of PCK1 and NR1D1. Deacetylates CTNB1 at 'Lys-49'. In POMC (pro-opiomelanocortin) neurons, required for leptin-induced activation of PI3K signaling. Deacetylates SOX9; promoting SOX9 nuclear localization and transactivation activity. Involved in the regulation of centrosome duplication: Deacetylates CENATAC in G1 phase, allowing for SASS6 accumulation on the centrosome and subsequent procentriole assembly. Deacetylates NDC80/HEC1. In addition to protein deacetylase activity, also acts as a protein-lysine deacylase by mediating protein delactylation, depropionylation and decrotonylation. Mediates depropionylation of Osterix (SP7). Catalyzes decrotonylation of histones; it however does not represent a major histone decrotonylase. Mediates protein delactylation of TEAD1 and YAP1. In terms of biological role, deacetylates 'Lys-382' of p53/TP53, however with lower activity than isoform 1. In combination, the two isoforms exert an additive effect. Isoform 2 regulates p53/TP53 expression and cellular stress response and is in turn repressed by p53/TP53 presenting a SIRT1 isoform-dependent auto-regulatory loop. Its function is as follows. Catalytically inactive 75SirT1 may be involved in regulation of apoptosis. May be involved in protecting chondrocytes from apoptotic death by associating with cytochrome C and interfering with apoptosome assembly. The protein is NAD-dependent protein deacetylase sirtuin-1 (Sirt1) of Mus musculus (Mouse).